Here is a 206-residue protein sequence, read N- to C-terminus: Small ribosomal subunit protein uS4 (206 aa).

The region spanning 96 to 157 (GRLDNVVYRM…KAKKQSRVRA (62 aa)) is the S4 RNA-binding domain.

Belongs to the universal ribosomal protein uS4 family. Part of the 30S ribosomal subunit. Contacts protein S5. The interaction surface between S4 and S5 is involved in control of translational fidelity.

Functionally, one of the primary rRNA binding proteins, it binds directly to 16S rRNA where it nucleates assembly of the body of the 30S subunit. In terms of biological role, with S5 and S12 plays an important role in translational accuracy. In Sodalis glossinidius (strain morsitans), this protein is Small ribosomal subunit protein uS4.